Reading from the N-terminus, the 523-residue chain is MSGKRKRVVLTIKDKLDIIKKLEDGGSSKQLAVIYGIGETTVRDIRKNKEKIITYASSSDSTSLLAKRKSMKPSMYEELDKAMLEWFNQQRAKGNPISGPICAKRAEFFFYALGMDGDFNPSAGWLTRFKQRHSIREINIRNERLNGDETAVEDFCNNFRDFIEQENLQPEQIYNADETGLFWKCLPSRTTVIKGKCTVPGHNLGEERITVMCCTNATGLHKLKLCVVGKARKPRSFKSTDTLNLPVSYFSQKGAWMDLSIFRQWFDKIFVPQVREYLRSKGLQEKAVLLLDNSPTHPNENVLRSDDGQIFAKYLPPNVASLIQPLGQGVIAAMKRNYRAGLLHNNLEEGNDLKSFWKKLTLLDALYEIAMAWNLVKPVTISRAWKQILPAIEEKEGLDFDEDISGATVATILQHTKGLENVTPENLEKWLEIDSTEPGYEVLTDSEIIRRAQGQTDESSENDEERIELIPEKHINHTTALQWTENLLDYLEQQGDMILPDRLVIRKLRATIRNKQKMTNPGQ.

Positions 1–52 constitute an HTH psq-type domain; that stretch reads MSGKRKRVVLTIKDKLDIIKKLEDGGSSKQLAVIYGIGETTVRDIRKNKEKI. DNA-binding regions (H-T-H motif) lie at residues 28-48 and 100-132; these read SKQL…IRKN and PICA…FKQR. The region spanning 67-139 is the HTH CENPB-type domain; sequence KRKSMKPSMY…KQRHSIREIN (73 aa). Residues 168-385 form the DDE-1 domain; it reads LQPEQIYNAD…VKPVTISRAW (218 aa).

Belongs to the tigger transposable element derived protein family.

It localises to the nucleus. The protein is Jerky protein homolog-like (Jrkl) of Mus musculus (Mouse).